Here is a 379-residue protein sequence, read N- to C-terminus: Chaperone protein DnaJ (379 aa).

Residues 5 to 71 (DYYEILGVSR…EKRAMYDRFG (67 aa)) enclose the J domain. A CR-type zinc finger spans residues 149-231 (GTTIPIEYDR…CGGSGRIRKR (83 aa)). Zn(2+)-binding residues include Cys162, Cys165, Cys179, Cys182, Cys205, Cys208, Cys219, and Cys222. CXXCXGXG motif repeat units lie at residues 162–169 (CSHCNGEG), 179–186 (CPKCHGTG), 205–212 (CNQCGGTG), and 219–226 (CHVCGGSG).

This sequence belongs to the DnaJ family. Homodimer. The cofactor is Zn(2+).

It is found in the cytoplasm. Functionally, participates actively in the response to hyperosmotic and heat shock by preventing the aggregation of stress-denatured proteins and by disaggregating proteins, also in an autonomous, DnaK-independent fashion. Unfolded proteins bind initially to DnaJ; upon interaction with the DnaJ-bound protein, DnaK hydrolyzes its bound ATP, resulting in the formation of a stable complex. GrpE releases ADP from DnaK; ATP binding to DnaK triggers the release of the substrate protein, thus completing the reaction cycle. Several rounds of ATP-dependent interactions between DnaJ, DnaK and GrpE are required for fully efficient folding. Also involved, together with DnaK and GrpE, in the DNA replication of plasmids through activation of initiation proteins. The protein is Chaperone protein DnaJ of Thermosipho africanus (strain TCF52B).